The following is a 24-amino-acid chain: Lycosin-I (24 aa).

Belongs to the cationic peptide 04 (cupiennin) family. 05 subfamily. In terms of assembly, monomer in solution. Small size oligomers on the lipid membranes.

It is found in the secreted. Its subcellular location is the target cell membrane. Its function is as follows. Antimicrobial peptide that inhibits many reference strains of bacteria and fungi. Is potent against Candida species and multidrug-resistant Acinetobacter baumannii (MDRAB). Is probably localized in the cytoplasm after being transported through the cell wall and membrane. Is able to interact with cell membranes and enter into cell plasma to activate the mitochondrial death pathway to sensitize cancer cells for apoptosis, as well as up-regulates p27 to inhibit cell proliferation. It shows very low effect on normal cells, such as erythrocytes, Hek293t cells. It also potently inhibits tumor cell growth in vitro, and suppresses various tumor growth in vivo when tested in human cancer xenograft models. It interacts with the cell membrane and is then internalized into the cytoplasm of cancer cells to initiate the programmable cell death. In addition, this peptide has the therapeutic effects of anti-hypertension by endothelium-dependent vasodilatation via the NO/sGC/cGMP signaling pathway. In vivo, this peptide also shows a significant ability to inhibit T.gondii invasion and proliferation, making it a potential alternative agent for the treatment of toxoplasmosis. This Lycosa singoriensis (Wolf spider) protein is Lycosin-I.